Reading from the N-terminus, the 694-residue chain is MFKPLLSAELFFNWTAKDFKDKTSFLKQACRVLQDKNCIKEEQIALTALKEREAQITTGIMSKLALPHMQSATVLKPFVAVFKVNNVDWQSLDNQPVKLIFLIGVPKDQGNLHLEFISQFSKLMLQDEFANKVPNIRSFNGLINLIDSFQQTAVASQPVVNEAAAQTEEPKDTNTQYDFVAVTACPTGIAHTFMAKEALEKFARDHNLKVKVETQGTDGIQNQLTESDLNNTKGIILACDRLIDLTRFYGHANVVEVSTTKAIKTPQTVYDQVVKKEGKLLGNKSSDSASQTELKETTEQLSFKDFHKRIYRAILSGVSYMLPFVVFGGILIAIAFLIDINNAGNAGKQFGSKDPIANWFKTLGGLSFGLIVPILSAYIAFALVGRQGLLPGFIVGLISAGKFLLNIDIVTGKIDWATESKVSSGFFGAIFGGLLAAVLIIVQQRYIYRKLPQALQGIKNILFIPLLGTLVTAALFWVINIPLIYLNYGLSKFLQIMDKPYLAPLLGLVIGLMMCFDLGGPVNKAAYVFGVVSLESQNSGTVAMASAILSGMVPPLGIAIAATIRKQCFDKEELPAAYACYVMGLSFISEGAIPFVAKRPKIMLAANLIGGAVCGVLTGAFALTIRAPHGGVFVFALLKTNLEGIAGNTLQIGAGVGLALLALIVSSFISAGIIIGHNLLVVRKKTKQLVNTNA.

Positions 4–149 constitute a PTS EIIA type-2 domain; the sequence is PLLSAELFFN…NGLINLIDSF (146 aa). Catalysis depends on His-68, which acts as the Tele-phosphohistidine intermediate; for EIIA activity. A Phosphohistidine; by HPr modification is found at His-68. The PTS EIIB type-2 domain maps to 179–275; that stretch reads FVAVTACPTG…PQTVYDQVVK (97 aa). Cys-185 functions as the Phosphocysteine intermediate; for EIIB activity in the catalytic mechanism. Cys-185 is modified (phosphocysteine; by EIIA). The region spanning 310–687 is the PTS EIIC type-2 domain; it reads IYRAILSGVS…NLLVVRKKTK (378 aa). 10 helical membrane-spanning segments follow: residues 318-338, 364-384, 390-410, 422-442, 461-481, 502-522, 542-562, 576-596, 602-622, and 655-675; these read VSYM…AFLI, GGLS…FALV, LPGF…IDIV, VSSG…LIIV, ILFI…VINI, LAPL…GGPV, VAMA…AIAA, AAYA…IPFV, IMLA…GAFA, and GVGL…GIII.

The protein resides in the cell membrane. It catalyses the reaction D-fructose(out) + N(pros)-phospho-L-histidyl-[protein] = D-fructose 1-phosphate(in) + L-histidyl-[protein]. In terms of biological role, the phosphoenolpyruvate-dependent sugar phosphotransferase system (sugar PTS), a major carbohydrate active transport system, catalyzes the phosphorylation of incoming sugar substrates concomitantly with their translocation across the cell membrane. This system is involved in fructose transport. The chain is PTS system fructose-specific EIIABC component from Mycoplasma pneumoniae (strain ATCC 29342 / M129 / Subtype 1) (Mycoplasmoides pneumoniae).